A 429-amino-acid polypeptide reads, in one-letter code: Glucose-1-phosphate adenylyltransferase (429 aa).

Residues G162, 177–178 (EK), and S209 each bind alpha-D-glucose 1-phosphate.

This sequence belongs to the bacterial/plant glucose-1-phosphate adenylyltransferase family. In terms of assembly, homotetramer.

The catalysed reaction is alpha-D-glucose 1-phosphate + ATP + H(+) = ADP-alpha-D-glucose + diphosphate. It participates in glycan biosynthesis; glycogen biosynthesis. Its function is as follows. Involved in the biosynthesis of ADP-glucose, a building block required for the elongation reactions to produce glycogen. Catalyzes the reaction between ATP and alpha-D-glucose 1-phosphate (G1P) to produce pyrophosphate and ADP-Glc. The protein is Glucose-1-phosphate adenylyltransferase of Rippkaea orientalis (strain PCC 8801 / RF-1) (Cyanothece sp. (strain PCC 8801)).